The primary structure comprises 134 residues: Cytochrome b5 (134 aa).

The Cytochrome b5 heme-binding domain occupies Lys5–Asp81. 2 residues coordinate heme: His40 and His64. The helical transmembrane segment at Phe107–Val127 threads the bilayer.

Belongs to the cytochrome b5 family.

The protein resides in the endoplasmic reticulum membrane. It is found in the microsome membrane. Its function is as follows. Membrane bound hemoprotein which function as an electron carrier for several membrane bound oxygenases. The chain is Cytochrome b5 (CYB5) from Brassica oleracea var. botrytis (Cauliflower).